A 139-amino-acid chain; its full sequence is Ribulose bisphosphate carboxylase small subunit, plasmid (139 aa).

Belongs to the RuBisCO small chain family. In terms of assembly, heterohexadecamer of 8 large and 8 small subunits.

Functionally, ruBisCO catalyzes two reactions: the carboxylation of D-ribulose 1,5-bisphosphate, the primary event in carbon dioxide fixation, as well as the oxidative fragmentation of the pentose substrate. Both reactions occur simultaneously and in competition at the same active site. Although the small subunit is not catalytic it is essential for maximal activity. This Cupriavidus necator (strain ATCC 17699 / DSM 428 / KCTC 22496 / NCIMB 10442 / H16 / Stanier 337) (Ralstonia eutropha) protein is Ribulose bisphosphate carboxylase small subunit, plasmid.